Reading from the N-terminus, the 369-residue chain is Dihydroorotate dehydrogenase (quinone) (369 aa).

Residues 66–70 (AGFDK) and threonine 90 each bind FMN. Lysine 70 contacts substrate. 115–119 (NRMGF) provides a ligand contact to substrate. Residues asparagine 143 and asparagine 176 each contribute to the FMN site. Asparagine 176 contacts substrate. Serine 179 functions as the Nucleophile in the catalytic mechanism. Residue asparagine 181 coordinates substrate. Residues lysine 217 and threonine 245 each coordinate FMN. 246-247 (NT) contributes to the substrate binding site. FMN-binding positions include glycine 271, glycine 300, and 321-322 (YT).

Belongs to the dihydroorotate dehydrogenase family. Type 2 subfamily. As to quaternary structure, monomer. FMN serves as cofactor.

The protein localises to the cell membrane. The enzyme catalyses (S)-dihydroorotate + a quinone = orotate + a quinol. It participates in pyrimidine metabolism; UMP biosynthesis via de novo pathway; orotate from (S)-dihydroorotate (quinone route): step 1/1. In terms of biological role, catalyzes the conversion of dihydroorotate to orotate with quinone as electron acceptor. The polypeptide is Dihydroorotate dehydrogenase (quinone) (Nocardia farcinica (strain IFM 10152)).